Reading from the N-terminus, the 633-residue chain is tRNA uridine 5-carboxymethylaminomethyl modification enzyme MnmG (633 aa).

13 to 18 (GGGHAG) lines the FAD pocket. 273 to 287 (GPRYCPSIEDKINRF) provides a ligand contact to NAD(+).

The protein belongs to the MnmG family. In terms of assembly, homodimer. Heterotetramer of two MnmE and two MnmG subunits. Requires FAD as cofactor.

It is found in the cytoplasm. Functionally, NAD-binding protein involved in the addition of a carboxymethylaminomethyl (cmnm) group at the wobble position (U34) of certain tRNAs, forming tRNA-cmnm(5)s(2)U34. The sequence is that of tRNA uridine 5-carboxymethylaminomethyl modification enzyme MnmG from Pseudoalteromonas atlantica (strain T6c / ATCC BAA-1087).